Reading from the N-terminus, the 426-residue chain is DNA polymerase processivity factor component OPG148 (426 aa).

This sequence belongs to the orthopoxvirus OPG148 family. Interacts with the DNA polymerase catalytic subunit OPG071. Interacts with UDG/OPG116. Component of the uracil-DNA glycosylase(UDG)-OPG148-polymerase complex; OPG148 and UDG form a heterodimeric processivity factor that associates with OPG071 to form the processive polymerase holoenzyme. Interacts with OPG117.

Its function is as follows. Plays an essential role in viral DNA replication by acting as the polymerase processivity factor together with protein OPG116. Serves as a bridge which links the DNA polymerase OPG071 and the uracil DNA glycosylase. The chain is DNA polymerase processivity factor component OPG148 (OPG148) from Vaccinia virus (strain Copenhagen) (VACV).